We begin with the raw amino-acid sequence, 275 residues long: Elongation factor Ts (275 aa).

The segment at 76–79 (TDFV) is involved in Mg(2+) ion dislocation from EF-Tu.

Belongs to the EF-Ts family.

The protein localises to the cytoplasm. Its function is as follows. Associates with the EF-Tu.GDP complex and induces the exchange of GDP to GTP. It remains bound to the aminoacyl-tRNA.EF-Tu.GTP complex up to the GTP hydrolysis stage on the ribosome. The polypeptide is Elongation factor Ts (Corynebacterium diphtheriae (strain ATCC 700971 / NCTC 13129 / Biotype gravis)).